A 75-amino-acid polypeptide reads, in one-letter code: Bacteriocin lactacin-F subunit LafA (75 aa).

Residues M1–G18 constitute a propeptide that is removed on maturation.

The protein belongs to the bacteriocin class IIB family. This bacteriocin depends upon the complementation of two peptides for activity: LafA and LafX. Associated with a 180 kDa bacteriocin complex.

In terms of biological role, heat stable bacteriocin active against Enterococcus faecalis and other Lactobacilli. The polypeptide is Bacteriocin lactacin-F subunit LafA (lafA) (Lactobacillus johnsonii (strain CNCM I-12250 / La1 / NCC 533)).